The sequence spans 292 residues: MPQHDQLHRYLFENFAVRGELVTVSETLQQILENHDYPQPVKNVLAELLVATSLLTATLKFDGDITVQLQGDGPMNLAVINGNNNQQMRGVARVQGEIPENADLKTLVGNGYVVITITPSEGERYQGVVGLEGDTLAACLEDYFMRSEQLPTRLFIRTGDVDGKPAAGGMLLQVMPAQNAQQDDFDHLATLTETIKTEELLTLPANEVLWRLYHEEEVTVYDPQDVEFKCTCSREHCADALKTLPDEEVDSILAEDGEIDMHCDYCGNHYLFNAMDIAEIRNNASPADPQVH.

2 cysteine pairs are disulfide-bonded: C230–C232 and C263–C266.

Belongs to the HSP33 family. Under oxidizing conditions two disulfide bonds are formed involving the reactive cysteines. Under reducing conditions zinc is bound to the reactive cysteines and the protein is inactive.

The protein resides in the cytoplasm. Redox regulated molecular chaperone. Protects both thermally unfolding and oxidatively damaged proteins from irreversible aggregation. Plays an important role in the bacterial defense system toward oxidative stress. This is 33 kDa chaperonin from Shigella boydii serotype 4 (strain Sb227).